Here is a 714-residue protein sequence, read N- to C-terminus: ATP-dependent zinc metalloprotease FtsH (714 aa).

Residues 1-75 lie on the Cytoplasmic side of the membrane; the sequence is MEKPRRLRPR…KNPMEPRQQQ (75 aa). Residues 76–96 form a helical membrane-spanning segment; the sequence is FSLWYVLVTILAMLAIQTLFV. The Periplasmic portion of the chain corresponds to 97–188; that stretch reads SGHVETIPYS…FVGQPDNKWL (92 aa). A helical membrane pass occupies residues 189 to 209; that stretch reads STILSWVVPAVIFFGIWSFLI. The Cytoplasmic segment spans residues 210–714; the sequence is KRVGGAAGSM…GKPDQKTQGT (505 aa). 280–287 lines the ATP pocket; that stretch reads GAPGTGKT. H502 contacts Zn(2+). The active site involves E503. The Zn(2+) site is built by H506 and D579. Residues 688 to 714 form a disordered region; that stretch reads PMPPPKPVANIEESTATGKPDQKTQGT. Positions 699–714 are enriched in polar residues; sequence EESTATGKPDQKTQGT.

It in the central section; belongs to the AAA ATPase family. The protein in the C-terminal section; belongs to the peptidase M41 family. In terms of assembly, homohexamer. The cofactor is Zn(2+).

The protein resides in the cell inner membrane. In terms of biological role, acts as a processive, ATP-dependent zinc metallopeptidase for both cytoplasmic and membrane proteins. Plays a role in the quality control of integral membrane proteins. The polypeptide is ATP-dependent zinc metalloprotease FtsH (Ralstonia pickettii (strain 12J)).